Reading from the N-terminus, the 209-residue chain is Thymidine kinase (209 aa).

ATP is bound by residues 9–16 and 88–91; these read SAMNAGKT and DEAQ. Residue Glu89 is the Proton acceptor of the active site.

It belongs to the thymidine kinase family. As to quaternary structure, homotetramer.

The protein resides in the cytoplasm. It catalyses the reaction thymidine + ATP = dTMP + ADP + H(+). In Xanthomonas axonopodis pv. citri (strain 306), this protein is Thymidine kinase.